A 140-amino-acid polypeptide reads, in one-letter code: Nuclear receptor 2C2-associated protein (140 aa).

Belongs to the NR2C2AP family. Interacts with NR2C2/TR4.

Its subcellular location is the nucleus. May act as a repressor of NR2C2-mediated transactivation by suppressing the binding between NR2C2/TR4 and the TR4-response element in target genes. This is Nuclear receptor 2C2-associated protein (NR2C2AP) from Bos taurus (Bovine).